The primary structure comprises 366 residues: Galactoside alpha-(1,2)-fucosyltransferase 1 (366 aa).

The Cytoplasmic portion of the chain corresponds to 1–8 (MWPLSHRH). A helical; Signal-anchor for type II membrane protein membrane pass occupies residues 9 to 25 (LCLAFLLVCVLSAISFF). Residues 26–366 (LHIHQDSFRH…LSPLWTLAEP (341 aa)) lie on the Lumenal side of the membrane. Asparagine 66, asparagine 302, and asparagine 328 each carry an N-linked (GlcNAc...) asparagine glycan.

It belongs to the glycosyltransferase 11 family.

It localises to the golgi apparatus. Its subcellular location is the golgi stack membrane. It catalyses the reaction a beta-D-galactosyl-(1-&gt;4)-N-acetyl-beta-D-glucosaminyl derivative + GDP-beta-L-fucose = an alpha-L-Fuc-(1-&gt;2)-beta-D-Gal-(1-&gt;4)-beta-D-GlcNAc derivative + GDP + H(+). The enzyme catalyses a ganglioside GA1 + GDP-beta-L-fucose = a ganglioside Fuc-GA1 + GDP + H(+). It carries out the reaction a beta-D-Gal-(1-&gt;3)-beta-D-GlcNAc-(1-&gt;3)-beta-D-Gal-(1-&gt;4)-beta-D-Glc-(1&lt;-&gt;1')-Cer(d18:1(4E)) + GDP-beta-L-fucose = alpha-L-fucosyl-(1-&gt;2)- beta-D-galactosyl-(1-&gt;3)-N-acetyl-beta-D-glucosaminyl-(1-&gt;3)-beta-D-galactosyl-(1-&gt;4)-beta-D-glucosyl-(1&lt;-&gt;1')-N-acylsphing-4-enine + GDP + H(+). The catalysed reaction is a neolactoside nLc4Cer(d18:1(4E)) + GDP-beta-L-fucose = a neolactoside IV(2)-alpha-Fuc-nLc4Cer(d18:1(4E)) + GDP + H(+). It catalyses the reaction a ganglioside GM1 + GDP-beta-L-fucose = a ganglioside Fuc-GM1 + GDP + H(+). The enzyme catalyses beta-D-galactosyl-(1-&gt;3)-N-acetyl-D-galactosamine + GDP-beta-L-fucose = alpha-L-fucosyl-(1-&gt;2)-beta-D-galactosyl-(1-&gt;3)-N-acetyl-D-galactosamine + GDP + H(+). The protein operates within protein modification; protein glycosylation. Its function is as follows. Catalyzes the transfer of L-fucose, from a guanosine diphosphate-beta-L-fucose, to the terminal galactose residue of glycoconjugates through an alpha(1,2) linkage leading to H antigen synthesis that is an intermediate substrate in the synthesis of ABO blood group antigens. H antigen is essential for maturation of the glomerular layer of the main olfactory bulb, in cell migration and early cell-cell contacts during tumor associated angiogenesis. Preferentially fucosylates soluble lactose and to a lesser extent fucosylates glycolipids gangliosides GA1 and GM1a. The sequence is that of Galactoside alpha-(1,2)-fucosyltransferase 1 from Ateles belzebuth (White-bellied spider monkey).